The sequence spans 655 residues: p-hydroxybenzoic acid efflux pump subunit AaeB (655 aa).

The next 11 membrane-spanning stretches (helical) occupy residues 13–33 (FAVKLATAIVLALFVGFHFQL), 38–58 (WAVLTAAIVAAGPAFAAGGEP), 69–89 (LRIIGTFIGCIAGLVIIIAMI), 93–113 (LLMILVCCIWAGFCTWISSLV), 121–141 (WGLAGYTALIIVITIQPEPLL), 152–172 (EIVIGIVCAIMADLLFSPRSI), 370–390 (LFWLWTGWTSGSGAMVMIAVV), 407–427 (FIYGTLAALPLGLLYFLVIIP), 431–451 (QSMLLLCISLAVLGFFLGIEV), 459–479 (MGALASTINIIVLDNPMTFHF), and 482–502 (FLDSALGQIVGCVLAFTVILL).

Belongs to the aromatic acid exporter ArAE (TC 2.A.85) family.

It is found in the cell inner membrane. Forms an efflux pump with AaeA. Could function as a metabolic relief valve, allowing to eliminate certain compounds when they accumulate to high levels in the cell. This is p-hydroxybenzoic acid efflux pump subunit AaeB from Escherichia coli O81 (strain ED1a).